The chain runs to 2131 residues: Protein Ycf2 (2131 aa).

1484–1491 (GSIGTGRS) serves as a coordination point for ATP.

It belongs to the Ycf2 family.

The protein resides in the plastid. It localises to the chloroplast stroma. In terms of biological role, probable ATPase of unknown function. Its presence in a non-photosynthetic plant (Epifagus virginiana) and experiments in tobacco indicate that it has an essential function which is probably not related to photosynthesis. The chain is Protein Ycf2 (ycf2-A) from Spinacia oleracea (Spinach).